We begin with the raw amino-acid sequence, 299 residues long: Delta-9 desaturase-like 5 protein (299 aa).

2 helical membrane-spanning segments follow: residues 31-51 (ADII…LAPF) and 55-75 (WEAL…ITFS). The Histidine box-1 motif lies at 77 to 82 (HRNLAH). The short motif at 114–118 (HRFHH) is the Histidine box-2 element. The next 2 membrane-spanning stretches (helical) occupy residues 174–194 (IGFH…LPYL) and 199–219 (GVGG…CHIW). Residues 246–250 (HNNHH) carry the Histidine box-3 motif.

It belongs to the fatty acid desaturase type 1 family. The cofactor is Fe cation.

Its subcellular location is the endoplasmic reticulum membrane. The protein operates within lipid metabolism; polyunsaturated fatty acid biosynthesis. The chain is Delta-9 desaturase-like 5 protein from Arabidopsis thaliana (Mouse-ear cress).